The chain runs to 179 residues: Molybdopterin synthase catalytic subunit (179 aa).

The segment covering 1–10 (MTTSEDQTTP) has biased composition (polar residues). A disordered region spans residues 1–21 (MTTSEDQTTPAHLDPKTYPRH). Substrate contacts are provided by residues 127–128 (HR), K143, and 150–152 (KRE).

This sequence belongs to the MoaE family. MOCS2B subfamily. As to quaternary structure, heterotetramer; composed of 2 small (MOCS2A) and 2 large (MOCS2B) subunits.

It localises to the cytoplasm. The enzyme catalyses 2 [molybdopterin-synthase sulfur-carrier protein]-C-terminal-Gly-aminoethanethioate + cyclic pyranopterin phosphate + H2O = molybdopterin + 2 [molybdopterin-synthase sulfur-carrier protein]-C-terminal Gly-Gly + 2 H(+). It participates in cofactor biosynthesis; molybdopterin biosynthesis. Catalytic subunit of the molybdopterin synthase complex, a complex that catalyzes the conversion of precursor Z into molybdopterin. Acts by mediating the incorporation of 2 sulfur atoms from thiocarboxylated MOCS2A into precursor Z to generate a dithiolene group. This Aspergillus oryzae (strain ATCC 42149 / RIB 40) (Yellow koji mold) protein is Molybdopterin synthase catalytic subunit.